Consider the following 387-residue polypeptide: Tetratricopeptide repeat protein 4 (387 aa).

Methionine 1 is subject to N-acetylmethionine. Phosphoserine is present on residues serine 47 and serine 51. TPR repeat units lie at residues 79 to 112 (AKTY…KCAD), 117 to 150 (AVLY…KPCH), and 151 to 184 (LKAI…DAKE). Serine 243 is subject to Phosphoserine.

Belongs to the TTC4 family. As to quaternary structure, interacts (via TPR repeats) with HSP90AB1. Interacts with HSPA8 and CDC6. Interacts with TBK1. Interacts with MSL1. As to expression, highly expressed in proliferating tissue and tumor cell lines but not in normal cell lines.

Its subcellular location is the nucleus. It is found in the nucleoplasm. The protein localises to the cytoplasm. Its function is as follows. May act as a co-chaperone for HSP90AB1. Promotes Sendai virus (SeV)-induced host cell innate immune responses. The polypeptide is Tetratricopeptide repeat protein 4 (TTC4) (Homo sapiens (Human)).